The following is a 189-amino-acid chain: Protein shisa-like-2A (189 aa).

2 helical membrane-spanning segments follow: residues 48–68 (SFFP…LVGL) and 70–90 (TAAV…YLFI). The tract at residues 98–189 (LDPGLSLQTT…PTPGPHGPVP (92 aa)) is disordered. Residues 140-171 (NTHLESNKKQTVSPTCLPQNQFMATVTASNIP) show a composition bias toward polar residues.

The protein belongs to the shisa family.

It is found in the membrane. This is Protein shisa-like-2A (Shisal2a) from Mus musculus (Mouse).